The sequence spans 243 residues: Uridylate kinase (243 aa).

15-18 (KLSG) lines the ATP pocket. The interval 23–28 (GEEGFG) is involved in allosteric activation by GTP. Residue Gly57 coordinates UMP. The ATP site is built by Gly58 and Arg62. UMP contacts are provided by residues Asp77 and 138-145 (TGNPFCTT). Residues Thr165, Tyr171, and Asp174 each contribute to the ATP site.

The protein belongs to the UMP kinase family. In terms of assembly, homohexamer.

The protein localises to the cytoplasm. The enzyme catalyses UMP + ATP = UDP + ADP. Its pathway is pyrimidine metabolism; CTP biosynthesis via de novo pathway; UDP from UMP (UMPK route): step 1/1. Its activity is regulated as follows. Allosterically activated by GTP. Inhibited by UTP. Its function is as follows. Catalyzes the reversible phosphorylation of UMP to UDP. The protein is Uridylate kinase of Shewanella denitrificans (strain OS217 / ATCC BAA-1090 / DSM 15013).